A 201-amino-acid polypeptide reads, in one-letter code: Small ribosomal subunit protein uS5 (201 aa).

Residues 1–28 (MAGPQRRGSGAGGGERRDRKGRDGGAGA) form a disordered region. Positions 14 to 23 (GERRDRKGRD) are enriched in basic and acidic residues. The 64-residue stretch at 34–97 (YVERVVAINR…EEAKKHFFKV (64 aa)) folds into the S5 DRBM domain.

The protein belongs to the universal ribosomal protein uS5 family. In terms of assembly, part of the 30S ribosomal subunit. Contacts proteins S4 and S8.

In terms of biological role, with S4 and S12 plays an important role in translational accuracy. Functionally, located at the back of the 30S subunit body where it stabilizes the conformation of the head with respect to the body. The polypeptide is Small ribosomal subunit protein uS5 (Streptomyces coelicolor (strain ATCC BAA-471 / A3(2) / M145)).